Here is a 167-residue protein sequence, read N- to C-terminus: MYCPFCRNPDSRVVDSRMADDGSAIRRRRQCPECGRRFTTVETTSLSVIKRSGVGEPFSRSKVINGVRKACQGRPVSEDDLAMLAQEVEEQIRASGAAEIDAHEVGLVILGPLQKLDEVAYLRFASVYQAFESLEDFEAAIAQLRHEAQEDAAERPATPRKPEKTSL.

The segment at 3–34 (CPFCRNPDSRVVDSRMADDGSAIRRRRQCPEC) is a zinc-finger region. In terms of domain architecture, ATP-cone spans 46–136 (LSVIKRSGVG…VYQAFESLED (91 aa)). A disordered region spans residues 148-167 (AQEDAAERPATPRKPEKTSL).

It belongs to the NrdR family. It depends on Zn(2+) as a cofactor.

Functionally, negatively regulates transcription of bacterial ribonucleotide reductase nrd genes and operons by binding to NrdR-boxes. This is Transcriptional repressor NrdR from Pseudarthrobacter chlorophenolicus (strain ATCC 700700 / DSM 12829 / CIP 107037 / JCM 12360 / KCTC 9906 / NCIMB 13794 / A6) (Arthrobacter chlorophenolicus).